We begin with the raw amino-acid sequence, 122 residues long: Vacuolar transporter chaperone complex subunit 1 (122 aa).

Residues 1 to 32 (MSTQPLLQTTPGKRIALPVRVEPKVFFANERT) are Cytoplasmic-facing. A helical membrane pass occupies residues 33-53 (FLSWLSFAVVLGGLSVGLLNF). Residues 54-59 (GDRIGK) lie on the Vacuolar side of the membrane. A helical transmembrane segment spans residues 60 to 80 (ISAGLFTIVAIGTMGYALGIY). Residues 81–101 (HWRASAIRRRGSGPYDDRLGP) lie on the Cytoplasmic side of the membrane. The chain crosses the membrane as a helical span at residues 102–122 (TILCFVLLAAIITNFVLRMLF).

Belongs to the VTC1 family. As to quaternary structure, the VTC core complex is an integral membrane heterooligomer composed of at least the catalytic subunit vtc4 and the accessory subunits vtc1 and vtc2. vtc1 is a small membrane protein without hydrophilic domain. Vtc2 and vtc4 are related and have 2 hydrophilic domains that face the cytosol, an N-terminal SPX domain and the central core domain. The central core in vtc4 is the catalytic domain. Vtc1 interacts with GTP-bound Ras-like cdc42, which is subsequently inactivated.

It localises to the vacuole membrane. In terms of biological role, accessory subunit of the vacuolar transporter chaperone (VTC) complex. The VTC complex acts as a vacuolar polyphosphate polymerase that catalyzes the synthesis of inorganic polyphosphate (polyP) via transfer of phosphate from ATP to a growing polyP chain, releasing ADP. VTC exposes its catalytic domain vtc4 to the cytosol, where the growing polyP chain winds through a tunnel-shaped pocket, integrating cytoplasmic polymer synthesis with polyP membrane translocation. The VTC complex carries 9 vacuolar transmembrane domains, which are likely to constitute the translocation channel into the organelle lumen. PolyP synthesis is tightly coupled to its transport into the vacuole lumen, in order to avoid otherwise toxic intermediates in the cytosol, and it depends on the proton gradient across the membrane, formed by V-ATPase. Vtc1 contributes only 3 transmembrane domains to the complex. The VTC complex also plays a role in vacuolar membrane fusion. Involved in the control of cell polarity. In Schizosaccharomyces pombe (strain 972 / ATCC 24843) (Fission yeast), this protein is Vacuolar transporter chaperone complex subunit 1.